We begin with the raw amino-acid sequence, 122 residues long: Small ribosomal subunit protein uS13 (122 aa).

The tract at residues 93 to 122 (RRGLPVRGQNTKTNARTRKGPKRTAGGKKK) is disordered. Over residues 107-122 (ARTRKGPKRTAGGKKK) the composition is skewed to basic residues.

Belongs to the universal ribosomal protein uS13 family. Part of the 30S ribosomal subunit. Forms a loose heterodimer with protein S19. Forms two bridges to the 50S subunit in the 70S ribosome.

Functionally, located at the top of the head of the 30S subunit, it contacts several helices of the 16S rRNA. In the 70S ribosome it contacts the 23S rRNA (bridge B1a) and protein L5 of the 50S subunit (bridge B1b), connecting the 2 subunits; these bridges are implicated in subunit movement. Contacts the tRNAs in the A and P-sites. This Syntrophomonas wolfei subsp. wolfei (strain DSM 2245B / Goettingen) protein is Small ribosomal subunit protein uS13.